We begin with the raw amino-acid sequence, 390 residues long: Lipid-A-disaccharide synthase (390 aa).

This sequence belongs to the LpxB family.

It carries out the reaction a lipid X + a UDP-2-N,3-O-bis[(3R)-3-hydroxyacyl]-alpha-D-glucosamine = a lipid A disaccharide + UDP + H(+). Its pathway is bacterial outer membrane biogenesis; LPS lipid A biosynthesis. In terms of biological role, condensation of UDP-2,3-diacylglucosamine and 2,3-diacylglucosamine-1-phosphate to form lipid A disaccharide, a precursor of lipid A, a phosphorylated glycolipid that anchors the lipopolysaccharide to the outer membrane of the cell. This is Lipid-A-disaccharide synthase from Paramagnetospirillum magneticum (strain ATCC 700264 / AMB-1) (Magnetospirillum magneticum).